Reading from the N-terminus, the 429-residue chain is Enolase (429 aa).

Residue Gln-167 coordinates (2R)-2-phosphoglycerate. Glu-209 (proton donor) is an active-site residue. Asp-246, Glu-289, and Asp-316 together coordinate Mg(2+). (2R)-2-phosphoglycerate is bound by residues Lys-341, Arg-370, Ser-371, and Lys-392. Lys-341 serves as the catalytic Proton acceptor.

Belongs to the enolase family. In terms of assembly, component of the RNA degradosome, a multiprotein complex involved in RNA processing and mRNA degradation. Mg(2+) serves as cofactor.

It localises to the cytoplasm. Its subcellular location is the secreted. The protein localises to the cell surface. It carries out the reaction (2R)-2-phosphoglycerate = phosphoenolpyruvate + H2O. The protein operates within carbohydrate degradation; glycolysis; pyruvate from D-glyceraldehyde 3-phosphate: step 4/5. In terms of biological role, catalyzes the reversible conversion of 2-phosphoglycerate (2-PG) into phosphoenolpyruvate (PEP). It is essential for the degradation of carbohydrates via glycolysis. The protein is Enolase of Ectopseudomonas mendocina (strain ymp) (Pseudomonas mendocina).